The following is a 1497-amino-acid chain: DNA-directed RNA polymerase subunit beta (1497 aa).

This sequence belongs to the RNA polymerase beta chain family. In terms of assembly, the RNAP catalytic core consists of 2 alpha, 1 beta, 1 beta' and 1 omega subunit. When a sigma factor is associated with the core the holoenzyme is formed, which can initiate transcription.

The enzyme catalyses RNA(n) + a ribonucleoside 5'-triphosphate = RNA(n+1) + diphosphate. In terms of biological role, DNA-dependent RNA polymerase catalyzes the transcription of DNA into RNA using the four ribonucleoside triphosphates as substrates. The chain is DNA-directed RNA polymerase subunit beta from Trichlorobacter lovleyi (strain ATCC BAA-1151 / DSM 17278 / SZ) (Geobacter lovleyi).